A 507-amino-acid chain; its full sequence is Probable bifunctional methylthioribulose-1-phosphate dehydratase/enolase-phosphatase E1 (507 aa).

A2 carries the N-acetylalanine modification. The interval 2–237 is methylthioribulose-1-phosphate dehydratase; sequence AVAAAAMIGL…AIKLHQLGLD (236 aa). Residue C109 coordinates substrate. Zn(2+) is bound by residues H127 and H129. E152 functions as the Proton donor/acceptor in the catalytic mechanism. H202 provides a ligand contact to Zn(2+). The tract at residues 268–507 is enolase-phosphatase E1; that stretch reads IVLDIEGTTT…FKTVTSFSQI (240 aa). Mg(2+) is bound by residues D271 and E273. Residues 406-407 and K440 each bind substrate; that span reads SS. Mg(2+) is bound at residue D466.

It in the N-terminal section; belongs to the aldolase class II family. MtnB subfamily. The protein in the C-terminal section; belongs to the HAD-like hydrolase superfamily. MasA/MtnC family. Requires Zn(2+) as cofactor. Mg(2+) is required as a cofactor.

The catalysed reaction is 5-(methylsulfanyl)-D-ribulose 1-phosphate = 5-methylsulfanyl-2,3-dioxopentyl phosphate + H2O. It catalyses the reaction 5-methylsulfanyl-2,3-dioxopentyl phosphate + H2O = 1,2-dihydroxy-5-(methylsulfanyl)pent-1-en-3-one + phosphate. It functions in the pathway amino-acid biosynthesis; L-methionine biosynthesis via salvage pathway; L-methionine from S-methyl-5-thio-alpha-D-ribose 1-phosphate: step 2/6. The protein operates within amino-acid biosynthesis; L-methionine biosynthesis via salvage pathway; L-methionine from S-methyl-5-thio-alpha-D-ribose 1-phosphate: step 3/6. Its pathway is amino-acid biosynthesis; L-methionine biosynthesis via salvage pathway; L-methionine from S-methyl-5-thio-alpha-D-ribose 1-phosphate: step 4/6. The protein is Probable bifunctional methylthioribulose-1-phosphate dehydratase/enolase-phosphatase E1 of Arabidopsis thaliana (Mouse-ear cress).